We begin with the raw amino-acid sequence, 85 residues long: Large ribosomal subunit protein bL27 (85 aa).

A disordered region spans residues 1 to 21 (MAHKKGVGSTRNGRDSDGQRL).

This sequence belongs to the bacterial ribosomal protein bL27 family.

The chain is Large ribosomal subunit protein bL27 from Geotalea uraniireducens (strain Rf4) (Geobacter uraniireducens).